Reading from the N-terminus, the 436-residue chain is Tubulin epsilon and delta complex protein 2 (436 aa).

2 disordered regions span residues 53 to 76 (ARTP…PSSQ) and 94 to 191 (VRKG…PSSA). A compositionally biased stretch (low complexity) spans 111–131 (TSKAATSGAAAASHPRAPSRG). Positions 153–170 (DYPEHRLRSKGDKTHVRT) are enriched in basic and acidic residues. S161 carries the post-translational modification Phosphoserine.

As to quaternary structure, interacts with TEDC1. Found in a complex with TEDC1, TEDC2, TUBE1 and TUBD1.

The protein localises to the cell projection. The protein resides in the cilium. It is found in the cytoplasm. It localises to the cytoskeleton. Its subcellular location is the microtubule organizing center. The protein localises to the centrosome. The protein resides in the centriole. Acts as a positive regulator of ciliary hedgehog signaling. Required for centriole stability. The sequence is that of Tubulin epsilon and delta complex protein 2 from Mus musculus (Mouse).